The following is a 2639-amino-acid chain: BAH and coiled-coil domain-containing protein 1 (2639 aa).

12 disordered regions span residues 23–49 (SAAA…GKYF), 84–107 (SAAS…GSHP), 188–249 (APAH…GKER), 669–702 (FLSS…RQPP), 716–746 (VSRS…PRST), 939–1047 (QRAA…QSTA), 1104–1331 (SDVH…HSSG), 1457–1513 (QREL…KKVK), 1582–1666 (KVKS…LGTE), 1722–1776 (EVKI…RDAL), 1868–1893 (FDDN…PLSA), and 2057–2119 (KKVS…DHFL). 2 stretches are compositionally biased toward low complexity: residues 24-41 (AAAA…QPPA) and 84-98 (SAAS…SSPP). Composition is skewed to basic and acidic residues over residues 211–247 (GPKD…DGGK) and 679–698 (ERPD…DGEV). Position 222 is an N6-acetyllysine (K222). Over residues 946 to 964 (RKPEDQHLDLEEPAQEKAP) the composition is skewed to basic and acidic residues. Residues 972–988 (ALTPTAPGAPSPAAGPT) show a composition bias toward low complexity. Over residues 989–1013 (KLPPCCHPPDPKPPASSPTPPPRPS) the composition is skewed to pro residues. The segment covering 1106–1122 (VHSSNLEDPETMQTTAP) has biased composition (polar residues). The segment covering 1182–1198 (LEGLQELQCAALLEAGG) has biased composition (low complexity). Residues 1212–1221 (AREERSREEG) are compositionally biased toward basic and acidic residues. The span at 1244 to 1275 (LEDEGEQPAPEEDELEEDELGQQSMEDSEEDC) shows a compositional bias: acidic residues. A compositionally biased stretch (pro residues) spans 1307-1324 (DSPPDPQPPAASGPPSTV). Positions 1439–1473 (EVGMRVRLAELQRRYKEKQRELARLQRKHDHERDE) form a coiled coil. The segment covering 1457 to 1475 (QRELARLQRKHDHERDESS) has biased composition (basic and acidic residues). Residues 1478–1492 (PARRGPGRPRKRKHS) are compositionally biased toward basic residues. Residues 1751–1761 (GKKKAKGKAKG) show a composition bias toward basic residues. The segment covering 1868-1888 (FDDNSSFSEEEEDEEEEEEDS) has biased composition (acidic residues). A Phosphoserine modification is found at S2274. Disordered stretches follow at residues 2317-2336 (SDCH…LAAG), 2348-2383 (SSSS…SDDE), and 2432-2472 (GAGS…ENRP). Residues 2348 to 2371 (SSSSSGSSTSSSSGSVSTSSLCSS) show a composition bias toward low complexity. The span at 2372–2383 (DNEDSSYSSDDE) shows a compositional bias: acidic residues. Residues 2432–2442 (GAGSGPSSSSK) show a composition bias toward low complexity. Residues 2513–2633 (ETLRVGDCAV…PTTGRLVTAD (121 aa)) form the BAH domain.

This is BAH and coiled-coil domain-containing protein 1 from Homo sapiens (Human).